Reading from the N-terminus, the 328-residue chain is 5,10-methylenetetrahydromethanopterin reductase (328 aa).

Belongs to the mer family.

The protein resides in the cytoplasm. The catalysed reaction is 5-methyl-5,6,7,8-tetrahydromethanopterin + oxidized coenzyme F420-(gamma-L-Glu)(n) + H(+) = 5,10-methylenetetrahydromethanopterin + reduced coenzyme F420-(gamma-L-Glu)(n). Its pathway is one-carbon metabolism; methanogenesis from CO(2); methyl-coenzyme M from 5,10-methylene-5,6,7,8-tetrahydromethanopterin: step 1/2. Catalyzes the reversible reduction of methylene-H(4)MPT to methyl-H(4)MPT. The protein is 5,10-methylenetetrahydromethanopterin reductase of Methanosarcina acetivorans (strain ATCC 35395 / DSM 2834 / JCM 12185 / C2A).